The chain runs to 1377 residues: Hemoglobin-binding protease hbp autotransporter (1377 aa).

An N-terminal signal peptide occupies residues Met-1–Ala-52. The Peptidase S6 domain maps to Gly-53–Gln-302. Catalysis depends on charge relay system residues His-125, Asp-153, and Ser-259. The 267-residue stretch at Asp-1111 to Phe-1377 folds into the Autotransporter domain.

In terms of processing, cleaved to release the mature protein from the outer membrane.

Its subcellular location is the periplasm. The protein localises to the secreted. The protein resides in the cell surface. It is found in the cell outer membrane. Protease activity is inhibited by 3,4-dichloroisocoumarin. Interacts with hemoglobin, degrades it and subsequently binds the released heme. Could make heme accessible not only for E.coli, but also for B.fragilis during mixed intra-abdominal infections. Has a role in abscess formation. The protein is Hemoglobin-binding protease hbp autotransporter (hbp) of Escherichia coli.